The sequence spans 137 residues: Large ribosomal subunit protein mL61 (137 aa).

It belongs to the mitochondrion-specific ribosomal protein mL61 family. Component of the mitochondrial large ribosomal subunit (mt-LSU). Mature yeast 74S mitochondrial ribosomes consist of a small (37S) and a large (54S) subunit. The 37S small subunit contains a 15S ribosomal RNA (15S mt-rRNA) and 34 different proteins. The 54S large subunit contains a 21S rRNA (21S mt-rRNA) and 46 different proteins.

Its subcellular location is the mitochondrion. Its function is as follows. Component of the mitochondrial ribosome (mitoribosome), a dedicated translation machinery responsible for the synthesis of mitochondrial genome-encoded proteins, including at least some of the essential transmembrane subunits of the mitochondrial respiratory chain. The mitoribosomes are attached to the mitochondrial inner membrane and translation products are cotranslationally integrated into the membrane. mL61 is not essential in cells grown at 30 degrees Celsius but is required for mitochondrial translation in cells grown at 18 degrees Celsius. In Saccharomyces cerevisiae (strain ATCC 204508 / S288c) (Baker's yeast), this protein is Large ribosomal subunit protein mL61 (MRP49).